We begin with the raw amino-acid sequence, 282 residues long: 4-diphosphocytidyl-2-C-methyl-D-erythritol kinase (282 aa).

Lys-12 is an active-site residue. 95 to 105 (PMGGGIGGGSS) provides a ligand contact to ATP. Asp-137 is a catalytic residue.

The protein belongs to the GHMP kinase family. IspE subfamily.

It carries out the reaction 4-CDP-2-C-methyl-D-erythritol + ATP = 4-CDP-2-C-methyl-D-erythritol 2-phosphate + ADP + H(+). Its pathway is isoprenoid biosynthesis; isopentenyl diphosphate biosynthesis via DXP pathway; isopentenyl diphosphate from 1-deoxy-D-xylulose 5-phosphate: step 3/6. In terms of biological role, catalyzes the phosphorylation of the position 2 hydroxy group of 4-diphosphocytidyl-2C-methyl-D-erythritol. The protein is 4-diphosphocytidyl-2-C-methyl-D-erythritol kinase of Pseudomonas aeruginosa (strain ATCC 15692 / DSM 22644 / CIP 104116 / JCM 14847 / LMG 12228 / 1C / PRS 101 / PAO1).